Reading from the N-terminus, the 115-residue chain is Class I hydrophobin C (115 aa).

An N-terminal signal peptide occupies residues Met-1–Ala-19. 4 disulfide bridges follow: Cys-36–Cys-93, Cys-43–Cys-87, Cys-44–Cys-74, and Cys-94–Cys-108.

This sequence belongs to the fungal hydrophobin family. In terms of assembly, self-assembles to form functional amyloid fibrils called rodlets. Self-assembly into fibrillar rodlets occurs spontaneously at hydrophobic:hydrophilic interfaces and the rodlets further associate laterally to form amphipathic monolayers.

It is found in the secreted. It localises to the cell wall. Its function is as follows. Aerial growth, conidiation, and dispersal of filamentous fungi in the environment rely upon a capability of their secreting small amphipathic proteins called hydrophobins (HPBs) with low sequence identity. Class I can self-assemble into an outermost layer of rodlet bundles on aerial cell surfaces, conferring cellular hydrophobicity that supports fungal growth, development and dispersal; whereas Class II form highly ordered films at water-air interfaces through intermolecular interactions but contribute nothing to the rodlet structure. The chain is Class I hydrophobin C from Agaricus bisporus (White button mushroom).